A 453-amino-acid chain; its full sequence is MWELDPKTLEKWDKEYFWHPFTQMKVYREEENLIFERGEGVYLWDIYGRKYIDAISSLWCNVHGHNHPKLNNAVMKQLCKVAHTTTLGSSNVPAILLAKKLVEISPEGLNKVFYSEDGAEAVEIAIKMAYHYWKNKGVKGKNVFITLSEAYHGDTVGAVSVGGIELFHGTYKDLLFKTIKLPSPYLYCKEKYGELCPECTADLLKQLEDILKSREDIVAVIMEAGIQAAAGMLPFPPGFLKGVRELTKKYDTLMIVDEVATGFGRTGTMFYCEQEGVSPDFMCLGKGITGGYLPLAATLTTDEVFNAFLGEFGEAKHFYHGHTYTGNNLACSVALANLEVFEEERTLEKLQPKIKLLKERLQEFWELKHVGDVRQLGFMAGIELVKDKEKGEPFPYGERTGFKVAYKCREKGVFLRPLGDVMVLMMPLVIEEDEMNYVIDTLKWAIKELEKEV.

A pyridoxal 5'-phosphate-binding site is contributed by Gly-118 to Ala-119. A substrate-binding site is contributed by Tyr-151. Asp-257 contributes to the pyridoxal 5'-phosphate binding site. Substrate-binding residues include Lys-286, Gly-321, and Arg-416. Lys-286 carries the post-translational modification N6-(pyridoxal phosphate)lysine.

Belongs to the class-III pyridoxal-phosphate-dependent aminotransferase family. BioA subfamily. As to quaternary structure, homodimer. Requires pyridoxal 5'-phosphate as cofactor.

It localises to the cytoplasm. It catalyses the reaction (8S)-8-amino-7-oxononanoate + S-adenosyl-L-methionine = S-adenosyl-4-methylsulfanyl-2-oxobutanoate + (7R,8S)-7,8-diammoniononanoate. Its pathway is cofactor biosynthesis; biotin biosynthesis; 7,8-diaminononanoate from 8-amino-7-oxononanoate (SAM route): step 1/1. Catalyzes the transfer of the alpha-amino group from S-adenosyl-L-methionine (SAM) to 7-keto-8-aminopelargonic acid (KAPA) to form 7,8-diaminopelargonic acid (DAPA). It is the only aminotransferase known to utilize SAM as an amino donor. The chain is Adenosylmethionine-8-amino-7-oxononanoate aminotransferase from Aquifex aeolicus (strain VF5).